A 189-amino-acid polypeptide reads, in one-letter code: dCTP deaminase, dUMP-forming (189 aa).

DCTP is bound by residues 101–106, aspartate 119, 127–129, glutamine 148, tyrosine 162, and glutamine 174; these read KSSLGR and TLE. The Proton donor/acceptor role is filled by glutamate 129.

The protein belongs to the dCTP deaminase family. Homotrimer.

It carries out the reaction dCTP + 2 H2O = dUMP + NH4(+) + diphosphate. It participates in pyrimidine metabolism; dUMP biosynthesis; dUMP from dCTP: step 1/1. Functionally, bifunctional enzyme that catalyzes both the deamination of dCTP to dUTP and the hydrolysis of dUTP to dUMP without releasing the toxic dUTP intermediate. This Rhodococcus jostii (strain RHA1) protein is dCTP deaminase, dUMP-forming.